Here is a 361-residue protein sequence, read N- to C-terminus: Rhomboid domain-containing protein 2 (361 aa).

The next 5 membrane-spanning stretches (helical) occupy residues 19-39 (SATF…LFLL), 63-83 (LVTY…AIII), 100-120 (CFFT…FESV), 158-178 (FGVV…SWLI), and 182-202 (SFLS…TYCY). 2 disordered regions span residues 265-287 (PSYP…PPGH) and 318-361 (PASA…VAMP). 2 stretches are compositionally biased toward polar residues: residues 267–276 (YPVTQMQHAS) and 318–328 (PASAGTSQGVQ).

It belongs to the peptidase S54 family. As to quaternary structure, might form homotrimers; these trimers are only formed in retina. In terms of tissue distribution, widely expressed, including in retina and brain (at protein level), as well as in kidney, testis and ovary. Expressed in all layers of the retina, including inner segments of photoreceptor cells and ganglion cells (at protein level).

Its subcellular location is the golgi apparatus. It is found in the cis-Golgi network membrane. The protein is Rhomboid domain-containing protein 2 (Rhbdd2) of Mus musculus (Mouse).